Here is a 436-residue protein sequence, read N- to C-terminus: 3-oxo-tetronate kinase (436 aa).

ATP is bound by residues Ser-272, 372–375 (GGET), and Gly-415.

It belongs to the four-carbon acid sugar kinase family.

The catalysed reaction is 3-dehydro-L-erythronate + ATP = 3-dehydro-4-O-phospho-L-erythronate + ADP + H(+). The enzyme catalyses 3-dehydro-D-erythronate + ATP = 3-dehydro-4-O-phospho-D-erythronate + ADP + H(+). In terms of biological role, catalyzes the ATP-dependent phosphorylation of 3-oxo-tetronate to 3-oxo-tetronate 4-phosphate. The sequence is that of 3-oxo-tetronate kinase from Brucella melitensis biotype 1 (strain ATCC 23456 / CCUG 17765 / NCTC 10094 / 16M).